Here is a 472-residue protein sequence, read N- to C-terminus: Nuclear receptor subfamily 0 group B member 1 (472 aa).

Tandem repeats lie at residues Met-1–Cys-67, Phe-68–Cys-135, and Phe-136–Tyr-202. The tract at residues Met-1 to Val-255 is 4 X 67 AA tandem repeats. 3 consecutive short sequence motifs (LXXLL motif) follow at residues Leu-13–Leu-17, Leu-80–Leu-84, and Leu-148–Leu-152. The NR LBD domain occupies Gln-190–Lys-471. A 4; truncated repeat occupies Val-203–Val-255. Disordered stretches follow at residues Val-214–Trp-237 and Arg-326–Gln-345. The AF-2 motif motif lies at Met-463–Leu-468.

It belongs to the nuclear hormone receptor family. NR0 subfamily. As to quaternary structure, homodimer. Interacts with NR5A1, NR5A2, NR0B2 and with COPS2. Interacts with ESRRB; represses ESRRB activity at the GATA6 promoter.

It is found in the nucleus. The protein resides in the cytoplasm. Its function is as follows. Nuclear receptor that lacks a DNA-binding domain and acts as a corepressor that inhibits the transcriptional activity of other nuclear receptors through heterodimeric interactions. Component of a cascade required for the development of the hypothalamic-pituitary-adrenal-gonadal axis. May also have a role in the development of the embryo and in the maintenance of embryonic stem cell pluripotency. The protein is Nuclear receptor subfamily 0 group B member 1 (Nr0b1) of Rattus norvegicus (Rat).